The following is a 193-amino-acid chain: Thymidine kinase (193 aa).

ATP-binding positions include 9 to 16 (ASMNAGKS) and 87 to 90 (DEAQ). Catalysis depends on Glu88, which acts as the Proton acceptor. 4 residues coordinate Zn(2+): Cys145, Cys147, Cys182, and His185.

It belongs to the thymidine kinase family. In terms of assembly, homotetramer.

It localises to the cytoplasm. It carries out the reaction thymidine + ATP = dTMP + ADP + H(+). The polypeptide is Thymidine kinase (Zymomonas mobilis subsp. mobilis (strain ATCC 31821 / ZM4 / CP4)).